The chain runs to 171 residues: Calcium-binding allergen Ole e 8 (171 aa).

EF-hand domains follow at residues 16–51 (QEPN…LGSN), 52–87 (TSKE…ETDP), 92–127 (GGEN…LGER), and 128–163 (YAEH…KSGN). Ca(2+) contacts are provided by Asp-29, Asn-31, Asp-33, Lys-35, Glu-40, Asp-65, Asp-67, Asp-69, Glu-76, Asp-105, Asp-107, Asn-109, Glu-116, Asp-141, Asp-143, Asp-145, Tyr-147, and Glu-152.

In terms of assembly, homodimer. In terms of tissue distribution, expressed in pollen.

The polypeptide is Calcium-binding allergen Ole e 8 (Olea europaea (Common olive)).